The sequence spans 559 residues: Urocanate hydratase (559 aa).

Residues 53-54 (GG), Q131, 177-179 (GMG), E197, R202, 243-244 (NA), 264-268 (QTSAH), 274-275 (YL), and Y323 contribute to the NAD(+) site. The active site involves C411. G493 is a binding site for NAD(+).

Belongs to the urocanase family. Requires NAD(+) as cofactor.

The protein resides in the cytoplasm. It catalyses the reaction 4-imidazolone-5-propanoate = trans-urocanate + H2O. It functions in the pathway amino-acid degradation; L-histidine degradation into L-glutamate; N-formimidoyl-L-glutamate from L-histidine: step 2/3. Catalyzes the conversion of urocanate to 4-imidazolone-5-propionate. In Pseudomonas paraeruginosa (strain DSM 24068 / PA7) (Pseudomonas aeruginosa (strain PA7)), this protein is Urocanate hydratase.